The primary structure comprises 219 residues: Membrin-12 (219 aa).

A2 is modified (N-acetylalanine). Residues 2–197 lie on the Cytoplasmic side of the membrane; that stretch reads ASGTVGGLSE…LIERRNRVDT (196 aa). A helical; Anchor for type IV membrane protein membrane pass occupies residues 198–215; that stretch reads WIKYAGMIATLVILYLFI. Residues 216–219 lie on the Vesicular side of the membrane; the sequence is RWTR.

It belongs to the GOSR2 family.

It is found in the golgi apparatus membrane. In terms of biological role, involved in transport of proteins from the cis/medial-Golgi to the trans-Golgi network. The protein is Membrin-12 (MEMB12) of Arabidopsis thaliana (Mouse-ear cress).